The chain runs to 873 residues: Alanine--tRNA ligase (873 aa).

Zn(2+) contacts are provided by H557, H561, C659, and H663.

It belongs to the class-II aminoacyl-tRNA synthetase family. Zn(2+) is required as a cofactor.

It is found in the cytoplasm. It catalyses the reaction tRNA(Ala) + L-alanine + ATP = L-alanyl-tRNA(Ala) + AMP + diphosphate. In terms of biological role, catalyzes the attachment of alanine to tRNA(Ala) in a two-step reaction: alanine is first activated by ATP to form Ala-AMP and then transferred to the acceptor end of tRNA(Ala). Also edits incorrectly charged Ser-tRNA(Ala) and Gly-tRNA(Ala) via its editing domain. The polypeptide is Alanine--tRNA ligase (Nitrosococcus oceani (strain ATCC 19707 / BCRC 17464 / JCM 30415 / NCIMB 11848 / C-107)).